The primary structure comprises 333 residues: Uroporphyrinogen decarboxylase (333 aa).

Substrate is bound by residues R21–R25, D70, Y139, S194, and H309.

Belongs to the uroporphyrinogen decarboxylase family. In terms of assembly, homodimer.

It localises to the cytoplasm. The catalysed reaction is uroporphyrinogen III + 4 H(+) = coproporphyrinogen III + 4 CO2. Its pathway is porphyrin-containing compound metabolism; protoporphyrin-IX biosynthesis; coproporphyrinogen-III from 5-aminolevulinate: step 4/4. Functionally, catalyzes the decarboxylation of four acetate groups of uroporphyrinogen-III to yield coproporphyrinogen-III. The protein is Uroporphyrinogen decarboxylase of Chlamydia caviae (strain ATCC VR-813 / DSM 19441 / 03DC25 / GPIC) (Chlamydophila caviae).